The chain runs to 318 residues: Putative 2-hydroxyacid dehydrogenase SH0752 (318 aa).

Residues 155–156 (EI), 234–236 (AGR), and Asp260 each bind NAD(+). Arg236 is an active-site residue. The active site involves Glu265. His283 (proton donor) is an active-site residue. NAD(+) is bound at residue 283–286 (HIGN).

The protein belongs to the D-isomer specific 2-hydroxyacid dehydrogenase family.

The sequence is that of Putative 2-hydroxyacid dehydrogenase SH0752 from Staphylococcus haemolyticus (strain JCSC1435).